The chain runs to 546 residues: ATP-dependent rRNA helicase RRP3 (546 aa).

The interval 1 to 108 (MSDFKRRKLE…DEEAEAQAAA (108 aa)) is disordered. Composition is skewed to acidic residues over residues 60 to 77 (SEEDEDEFGGFSGEEEED) and 94 to 103 (EAEQSDEEAE). The Q motif signature appears at 115–143 (KTFADLGVREELCDACENLGYKTATPIQT). Positions 146–318 (IPLALAGKDI…RAALKNPVRV (173 aa)) constitute a Helicase ATP-binding domain. 159-166 (AETGSGKT) is an ATP binding site. Residues 265-268 (DEAD) carry the DEAD box motif. Positions 342–490 (YKDLYLIHLL…EEKVSRDEVM (149 aa)) constitute a Helicase C-terminal domain. The segment covering 504–515 (VREMKDLHDQRK) has biased composition (basic and acidic residues). A disordered region spans residues 504 to 546 (VREMKDLHDQRKSGRGGRGGGRGGGRGGRGRGGRRDNMDMDEG). The segment covering 519-530 (GGRGGGRGGGRG) has biased composition (gly residues). Over residues 536–546 (GRRDNMDMDEG) the composition is skewed to basic and acidic residues.

Belongs to the DEAD box helicase family. DDX47/RRP3 subfamily. Interacts with the SSU processome.

It localises to the nucleus. It catalyses the reaction ATP + H2O = ADP + phosphate + H(+). Its function is as follows. ATP-dependent rRNA helicase required for pre-ribosomal RNA processing. Involved in the maturation of the 35S-pre-rRNA and to its cleavage to mature 18S rRNA. In Phaeosphaeria nodorum (strain SN15 / ATCC MYA-4574 / FGSC 10173) (Glume blotch fungus), this protein is ATP-dependent rRNA helicase RRP3.